A 104-amino-acid polypeptide reads, in one-letter code: SOSS complex subunit C (104 aa).

This sequence belongs to the SOSS-C family. Belongs to the multiprotein complex Integrator. Component of the SOSS complex, composed of SOSS-B (SOSS-B1/NABP2 or SOSS-B2/NABP1), SOSS-A/INTS3 and SOSS-C/INIP.

It is found in the nucleus. Component of the SOSS complex, a multiprotein complex that functions downstream of the MRN complex to promote DNA repair and G2/M checkpoint. The SOSS complex associates with single-stranded DNA at DNA lesions and influences diverse endpoints in the cellular DNA damage response including cell-cycle checkpoint activation, recombinational repair and maintenance of genomic stability. Required for efficient homologous recombination-dependent repair of double-strand breaks (DSBs). The polypeptide is SOSS complex subunit C (INIP) (Taeniopygia guttata (Zebra finch)).